A 358-amino-acid chain; its full sequence is Probable ABC transporter periplasmic-binding protein y4fP (358 aa).

Residues 1–46 form the signal peptide; the sequence is MRNVIKLTWSRRKRSASLDKGENIMKLAFAFATAAIVVAAAFPALA.

The protein belongs to the bacterial solute-binding protein 1 family.

The protein resides in the periplasm. Probably part of the binding-protein-dependent transport system y4fNOP. This chain is Probable ABC transporter periplasmic-binding protein y4fP, found in Sinorhizobium fredii (strain NBRC 101917 / NGR234).